Consider the following 722-residue polypeptide: MRKILKLKIGRDELVFETGFMAKQANGSVLATYGGSSVLATVCCSSNVREDLDFVPLSVEYNEKYYAAGKIPGGFIKREGKPKDKEILVSRLIDRPMRPLFDKRFGREIQVIPTTLATDQLNPPDIVGMNAAFTAVFLSDIPFNGPIAAVRMVYLNGKFIVNPSFEEIHDSDLDIVVAGSLNGITMVEGGANEVGEDILLSAIDGAHEYIKQICNAQKEFLDIVGKKEKLPLAFEEKIFEFKDELRDFVYADLKEACFVKGKLNRDKAITLLRNKSYEYFSSLEKLTDSNESLFHKAFDDFEKEIVRSSILNDNIRTDGRTPNEIRDIISEVDILSRTHGSALFTRGETQALAVTTLGTSIDEQIMDDIDGDKRLNFMLHYNFPPFSVGETGRLMTGRREIGHGHLAQRALESMVPGKNDFPYTIRVVSEVLESNGSSSMATVCAGSMSLMSAGVPVKGQVAGIAMGLISEGDKYVVLSDILGEEDHLGDMDFKVAGTKNGITGFQMDIKIENVTKDLMRDALEQARIGRIHILSIMNTVISNSRVGISKYAPKIVQLQIDIDKISLVIGSTGKTVKAITDEFEVKVQIEQNGKIILFGDDDFKMQKAKERIESIVREPKVGEIYEGTVKKINSFGAFIELTPAKEGFLSTRLKPRDSKYGSGRFGNSNRYSRFGGGGENIRGNAGLVRPPKLEEGQRIKVKIIDIDKFGKIDLEIVRDKDY.

2 residues coordinate Mg(2+): aspartate 486 and aspartate 492. A KH domain is found at 553-612 (PKIVQLQIDIDKISLVIGSTGKTVKAITDEFEVKVQIEQNGKIILFGDDDFKMQKAKERI). The region spanning 622–717 (GEIYEGTVKK…KFGKIDLEIV (96 aa)) is the S1 motif domain.

The protein belongs to the polyribonucleotide nucleotidyltransferase family. Mg(2+) serves as cofactor.

The protein localises to the cytoplasm. It carries out the reaction RNA(n+1) + phosphate = RNA(n) + a ribonucleoside 5'-diphosphate. Functionally, involved in mRNA degradation. Catalyzes the phosphorolysis of single-stranded polyribonucleotides processively in the 3'- to 5'-direction. The sequence is that of Polyribonucleotide nucleotidyltransferase from Borreliella burgdorferi (strain ZS7) (Borrelia burgdorferi).